Consider the following 471-residue polypeptide: 5-hydroxytryptamine receptor 2A (471 aa).

The Extracellular portion of the chain corresponds to 1 to 80 (MDILCEENTS…LQEKNWSALL (80 aa)). Asn-8, Asn-38, Asn-44, Asn-51, and Asn-54 each carry an N-linked (GlcNAc...) asparagine glycan. The helical transmembrane segment at 81–97 (TAVVIILTIAGNILVIM) threads the bilayer. The Cytoplasmic segment spans residues 98–111 (AVSLEKKLQNATNY). A helical transmembrane segment spans residues 112–137 (FLMSLAIADMLLGFLVMPVSMLTILY). Over 138 to 146 (GYRWPLPSK) the chain is Extracellular. A helical membrane pass occupies residues 147–171 (LCAVWIYLDVLFSTASIMHLCAISL). Cys-148 and Cys-227 are oxidised to a cystine. Asp-155 is a binding site for serotonin. The DRY motif; important for ligand-induced conformation changes motif lies at 172-174 (DRY). At 172-191 (DRYVAIQNPIHHSRFNSRTK) the chain is on the cytoplasmic side. The chain crosses the membrane as a helical span at residues 192–215 (AFLKIIAVWTISVGISMPIPVFGL). Over 216 to 232 (QDDSKVFKEGSCLLADD) the chain is Extracellular. A helical membrane pass occupies residues 233 to 258 (NFVLIGSFVSFFIPLTIMVITYFLTI). The Cytoplasmic segment spans residues 259-322 (KSLQKEATLC…QSISNEQKAC (64 aa)). Position 280 is a phosphoserine (Ser-280). A helical transmembrane segment spans residues 323-348 (KVLGIVFFLFVVMWCPFFITNIMAVI). A serotonin-binding site is contributed by Asn-343. Cysteines 349 and 353 form a disulfide. Residues 349–356 (CKESCNED) are Extracellular-facing. A helical membrane pass occupies residues 357–382 (VIGALLNVFVWIGYLSSAVNPLVYTL). The short motif at 376-380 (NPLVY) is the NPxxY motif; important for ligand-induced conformation changes and signaling element. The Cytoplasmic portion of the chain corresponds to 383 to 471 (FNKTYRSAFS…DGVNEKVSCV (89 aa)). A disordered region spans residues 450 to 471 (KQHSEDASKDNSDGVNEKVSCV). Residues 451-465 (QHSEDASKDNSDGVN) are compositionally biased toward basic and acidic residues. The PDZ-binding signature appears at 469-471 (SCV).

This sequence belongs to the G-protein coupled receptor 1 family. Interacts (via C-terminus) with MPDZ and PATJ. May interact (via C-terminus) with MPP3, PRDX6, DLG4, DLG1, CASK, APBA1 and MAGI2. Interacts with GRM2 and DRD2; this may affect signaling.

The protein resides in the cell membrane. It localises to the cell projection. It is found in the dendrite. Its subcellular location is the axon. The protein localises to the cytoplasmic vesicle. The protein resides in the membrane. It localises to the caveola. It is found in the presynapse. G-protein coupled receptor activity is regulated by lipids: oleamide increases HTR2A-mediated activity. In terms of biological role, G-protein coupled receptor for 5-hydroxytryptamine (serotonin). Also functions as a receptor for various drugs and psychoactive substances, including mescaline, psilocybin, 1-(2,5-dimethoxy-4-iodophenyl)-2-aminopropane (DOI) and lysergic acid diethylamide (LSD). Ligand binding causes a conformation change that triggers signaling via guanine nucleotide-binding proteins (G proteins) and modulates the activity of downstream effectors. HTR2A is coupled to G(q)/G(11) G alpha proteins and activates phospholipase C-beta, releasing diacylglycerol (DAG) and inositol 1,4,5-trisphosphate (IP3) second messengers that modulate the activity of phosphatidylinositol 3-kinase and promote the release of Ca(2+) ions from intracellular stores, respectively. Beta-arrestin family members inhibit signaling via G proteins and mediate activation of alternative signaling pathways. Affects neural activity, perception, cognition and mood. Plays a role in the regulation of behavior, including responses to anxiogenic situations and psychoactive substances. Plays a role in intestinal smooth muscle contraction, and may play a role in arterial vasoconstriction. This chain is 5-hydroxytryptamine receptor 2A (HTR2A), found in Macaca mulatta (Rhesus macaque).